The following is a 704-amino-acid chain: Elongation factor G (704 aa).

The region spanning 8-291 (DRVRNIGIMA…AVIEYLASPV (284 aa)) is the tr-type G domain. GTP contacts are provided by residues 17-24 (AHIDAGKT), 90-94 (DTPGH), and 144-147 (NKMD).

This sequence belongs to the TRAFAC class translation factor GTPase superfamily. Classic translation factor GTPase family. EF-G/EF-2 subfamily.

The protein resides in the cytoplasm. Its function is as follows. Catalyzes the GTP-dependent ribosomal translocation step during translation elongation. During this step, the ribosome changes from the pre-translocational (PRE) to the post-translocational (POST) state as the newly formed A-site-bound peptidyl-tRNA and P-site-bound deacylated tRNA move to the P and E sites, respectively. Catalyzes the coordinated movement of the two tRNA molecules, the mRNA and conformational changes in the ribosome. This is Elongation factor G from Chlorobium chlorochromatii (strain CaD3).